Here is a 227-residue protein sequence, read N- to C-terminus: PKHD-type hydroxylase BamMC406_4714 (227 aa).

The Fe2OG dioxygenase domain occupies 78 to 178; sequence KVFPPLFNRY…RVASFFWIQS (101 aa). Residues histidine 96, aspartate 98, and histidine 159 each contribute to the Fe cation site. Arginine 169 contributes to the 2-oxoglutarate binding site.

It depends on Fe(2+) as a cofactor. L-ascorbate serves as cofactor.

The polypeptide is PKHD-type hydroxylase BamMC406_4714 (Burkholderia ambifaria (strain MC40-6)).